The primary structure comprises 433 residues: Chaperone SurA (433 aa).

An N-terminal signal peptide occupies residues 1 to 28 (MTAITRITLTGALLAAALLLAALQPARA). 2 PpiC domains span residues 174 to 277 (NQEY…KLMD) and 286 to 386 (VTET…QVTD).

Its subcellular location is the periplasm. The enzyme catalyses [protein]-peptidylproline (omega=180) = [protein]-peptidylproline (omega=0). Its function is as follows. Chaperone involved in the correct folding and assembly of outer membrane proteins. Recognizes specific patterns of aromatic residues and the orientation of their side chains, which are found more frequently in integral outer membrane proteins. May act in both early periplasmic and late outer membrane-associated steps of protein maturation. In Alkalilimnicola ehrlichii (strain ATCC BAA-1101 / DSM 17681 / MLHE-1), this protein is Chaperone SurA.